The primary structure comprises 116 residues: Tyrosine-protein phosphatase 14 (116 aa).

One can recognise a Tyrosine-protein phosphatase domain in the interval 1–116; the sequence is WRMITQEKAQ…SLKNPGPVIV (116 aa). D84 provides a ligand contact to substrate.

This sequence belongs to the protein-tyrosine phosphatase family.

It catalyses the reaction O-phospho-L-tyrosyl-[protein] + H2O = L-tyrosyl-[protein] + phosphate. The chain is Tyrosine-protein phosphatase 14 (STY-14) from Styela plicata (Wrinkled sea squirt).